The following is a 214-amino-acid chain: Probable transaldolase (214 aa).

Residue Lys-83 is the Schiff-base intermediate with substrate of the active site.

It belongs to the transaldolase family. Type 3B subfamily.

It is found in the cytoplasm. It catalyses the reaction D-sedoheptulose 7-phosphate + D-glyceraldehyde 3-phosphate = D-erythrose 4-phosphate + beta-D-fructose 6-phosphate. The protein operates within carbohydrate degradation; pentose phosphate pathway; D-glyceraldehyde 3-phosphate and beta-D-fructose 6-phosphate from D-ribose 5-phosphate and D-xylulose 5-phosphate (non-oxidative stage): step 2/3. Transaldolase is important for the balance of metabolites in the pentose-phosphate pathway. This chain is Probable transaldolase, found in Alkaliphilus metalliredigens (strain QYMF).